The primary structure comprises 292 residues: uncharacterized protein (292 aa).

The signal sequence occupies residues 1–21 (MNSNSNKKRDPARFPAGVAQG). Positions 1 to 30 (MNSNSNKKRDPARFPAGVAQGCSTTRAGDL) are disordered.

This is an uncharacterized protein from Treponema pallidum (strain Nichols).